We begin with the raw amino-acid sequence, 500 residues long: MDVFKQSEVWFVIGSQNLYGPKTLQQVMDNAHQVVNSLNSEAGLPVKLVLKPLVTTPDEITALCREANYDTACIGIMTWLHTFSPAKMWIGGLSILNKPLLQFHTQFNAQIPWETMDMDFMNLNQTAHGGREFGFIGARMRQQHSVITGHWQDKEAHQRIGQWMRVAAAKQESQQLKVARFGDNMREVAVTEGDKVAAQIQFGYSVNAYGIGDLVAVVDAVSKGDIDTLVEEYEATYRFTDAVKLNGDKRENLLDAARIELGMTRFLEQGGFKAFTTNFENLYGLKQLPGLAVQRLMQQGYGFGGEGDWKTAALLRILKVMGTGLKGGTSFMEDYTYNFQPGNDLVVGSHMLEVCPSIAKEEKPLLDVQHLGIGGKADPARLIFSTPAGPALNASLIDMGNRFRLLVNVVDTVEQPHPLPKLPVARAIWQAQPSLATAAEAWIIAGGAHHTVFSQAVGVDELRLYAEMHGIEFLLIDNDTTLPAFKNEIRWNEVYYQLNR.

The Mn(2+) site is built by Glu-306, Glu-333, His-350, and His-450.

This sequence belongs to the arabinose isomerase family. In terms of assembly, homohexamer. It depends on Mn(2+) as a cofactor.

It carries out the reaction beta-L-arabinopyranose = L-ribulose. It functions in the pathway carbohydrate degradation; L-arabinose degradation via L-ribulose; D-xylulose 5-phosphate from L-arabinose (bacterial route): step 1/3. Functionally, catalyzes the conversion of L-arabinose to L-ribulose. This chain is L-arabinose isomerase, found in Yersinia pseudotuberculosis serotype I (strain IP32953).